A 94-amino-acid chain; its full sequence is U27-theraphotoxin-Cg1a (94 aa).

Positions 1 to 22 (MIFLLPPVIFVMLLAESVLILG) are cleaved as a signal peptide. A propeptide spanning residues 23–58 (DSEDADLMEMVQMSRPFFNPIIPAVEFVDLREERQR) is cleaved from the precursor. Intrachain disulfides connect Cys60/Cys78, Cys67/Cys83, and Cys77/Cys88.

This sequence belongs to the neurotoxin 14 (magi-1) family. OAIP-1 subfamily. As to expression, expressed by the venom gland.

The protein localises to the secreted. Functionally, probable ion channel inhibitor. This is U27-theraphotoxin-Cg1a from Chilobrachys guangxiensis (Chinese earth tiger tarantula).